Reading from the N-terminus, the 397-residue chain is Nuclear RNA export factor 5 (397 aa).

The 80-residue stretch at 13 to 92 (WFKVTIPYGI…IFVSHFTAPY (80 aa)) folds into the RRM domain. LRR repeat units follow at residues 160–185 (ELLS…EKAP), 186–209 (KVKT…VKGL), 210–237 (KLEE…AIRD), and 238–265 (CFPK…ETMK). The NTF2; truncated domain occupies 280 to 367 (LVLQFLQQSN…ESQRWWCLLS (88 aa)).

Belongs to the NXF family. As to quaternary structure, interacts with NXT1 and NXT2.

It is found in the cytoplasm. It localises to the nucleus. Could be involved in the export of mRNA from the nucleus to the cytoplasm. Could also have a role in polarized cytoplasmic transport and localization of mRNA in neurons. This chain is Nuclear RNA export factor 5 (NXF5), found in Homo sapiens (Human).